The following is a 112-amino-acid chain: UPF0102 protein C8J_0145 (112 aa).

This sequence belongs to the UPF0102 family.

The sequence is that of UPF0102 protein C8J_0145 from Campylobacter jejuni subsp. jejuni serotype O:6 (strain 81116 / NCTC 11828).